A 409-amino-acid polypeptide reads, in one-letter code: Translation initiation factor 2 subunit gamma (409 aa).

In terms of domain architecture, tr-type G spans 6–203; it reads QPEVNIGLVG…AVQSEIPTPE (198 aa). A G1 region spans residues 15 to 22; the sequence is GHVDHGKT. Mg(2+)-binding residues include Asp-18, Thr-22, Gly-43, and Ser-45. GTP is bound at residue 18–23; sequence DHGKTT. The tract at residues 43-47 is G2; it reads GISIR. The segment at 90 to 93 is G3; it reads DAPG. GTP-binding positions include 146 to 149 and 181 to 183; these read NKVD and SAG. A G4 region spans residues 146-149; sequence NKVD. A G5 region spans residues 181–183; it reads SAG.

The protein belongs to the TRAFAC class translation factor GTPase superfamily. Classic translation factor GTPase family. EIF2G subfamily. Heterotrimer composed of an alpha, a beta and a gamma chain. Requires Mg(2+) as cofactor.

It carries out the reaction GTP + H2O = GDP + phosphate + H(+). Its function is as follows. eIF-2 functions in the early steps of protein synthesis by forming a ternary complex with GTP and initiator tRNA. This chain is Translation initiation factor 2 subunit gamma, found in Haloarcula marismortui (strain ATCC 43049 / DSM 3752 / JCM 8966 / VKM B-1809) (Halobacterium marismortui).